The primary structure comprises 232 residues: Large ribosomal subunit protein uL1 (232 aa).

Belongs to the universal ribosomal protein uL1 family. In terms of assembly, part of the 50S ribosomal subunit.

Its function is as follows. Binds directly to 23S rRNA. The L1 stalk is quite mobile in the ribosome, and is involved in E site tRNA release. Functionally, protein L1 is also a translational repressor protein, it controls the translation of the L11 operon by binding to its mRNA. This is Large ribosomal subunit protein uL1 from Rhizobium rhizogenes (strain K84 / ATCC BAA-868) (Agrobacterium radiobacter).